The following is a 291-amino-acid chain: Elongation factor Ts (291 aa).

Residues threonine 79 to valine 82 form an involved in Mg(2+) ion dislocation from EF-Tu region.

Belongs to the EF-Ts family.

Its subcellular location is the cytoplasm. In terms of biological role, associates with the EF-Tu.GDP complex and induces the exchange of GDP to GTP. It remains bound to the aminoacyl-tRNA.EF-Tu.GTP complex up to the GTP hydrolysis stage on the ribosome. The chain is Elongation factor Ts from Anaplasma marginale (strain St. Maries).